Here is a 201-residue protein sequence, read N- to C-terminus: Elongation factor Ts (201 aa).

The interval 83 to 86 (TDFV) is involved in Mg(2+) ion dislocation from EF-Tu.

This sequence belongs to the EF-Ts family.

The protein localises to the cytoplasm. Functionally, associates with the EF-Tu.GDP complex and induces the exchange of GDP to GTP. It remains bound to the aminoacyl-tRNA.EF-Tu.GTP complex up to the GTP hydrolysis stage on the ribosome. In Methylacidiphilum infernorum (isolate V4) (Methylokorus infernorum (strain V4)), this protein is Elongation factor Ts.